Reading from the N-terminus, the 135-residue chain is UPF0102 protein Aave_0630 (135 aa).

Positions 1 to 21 (MGILEKKTAGPGGAARKTTTR) are disordered.

The protein belongs to the UPF0102 family.

This is UPF0102 protein Aave_0630 from Paracidovorax citrulli (strain AAC00-1) (Acidovorax citrulli).